We begin with the raw amino-acid sequence, 170 residues long: RNA pyrophosphohydrolase (170 aa).

The Nudix hydrolase domain occupies 6–150; it reads GFRPNVGIIL…KRDVYRRALR (145 aa). Positions 39–60 match the Nudix box motif; it reads GGINAHESPEQALYRELHEEVG.

The protein belongs to the Nudix hydrolase family. RppH subfamily. A divalent metal cation is required as a cofactor.

Functionally, accelerates the degradation of transcripts by removing pyrophosphate from the 5'-end of triphosphorylated RNA, leading to a more labile monophosphorylated state that can stimulate subsequent ribonuclease cleavage. In Cellvibrio japonicus (strain Ueda107) (Pseudomonas fluorescens subsp. cellulosa), this protein is RNA pyrophosphohydrolase.